We begin with the raw amino-acid sequence, 212 residues long: Large ribosomal subunit protein uL1 (212 aa).

The protein belongs to the universal ribosomal protein uL1 family. As to quaternary structure, part of the 50S ribosomal subunit.

Its function is as follows. Binds directly to 23S rRNA. Probably involved in E site tRNA release. Protein L1 is also a translational repressor protein, it controls the translation of its operon by binding to its mRNA. This Halobacterium salinarum (strain ATCC 29341 / DSM 671 / R1) protein is Large ribosomal subunit protein uL1.